A 94-amino-acid polypeptide reads, in one-letter code: Large ribosomal subunit protein bL25 (94 aa).

This sequence belongs to the bacterial ribosomal protein bL25 family. Part of the 50S ribosomal subunit; part of the 5S rRNA/L5/L18/L25 subcomplex. Contacts the 5S rRNA. Binds to the 5S rRNA independently of L5 and L18.

Its function is as follows. This is one of the proteins that binds to the 5S RNA in the ribosome where it forms part of the central protuberance. This is Large ribosomal subunit protein bL25 from Shigella boydii serotype 18 (strain CDC 3083-94 / BS512).